The chain runs to 42 residues: Large ribosomal subunit protein P2 (42 aa).

Belongs to the eukaryotic ribosomal protein P1/P2 family. In terms of assembly, P1 and P2 exist as dimers at the large ribosomal subunit. In terms of processing, phosphorylated.

Its function is as follows. Plays an important role in the elongation step of protein synthesis. The chain is Large ribosomal subunit protein P2 from Triticum aestivum (Wheat).